We begin with the raw amino-acid sequence, 557 residues long: MMSHTETSLGAENTRTHNFITQIIDEDLASGKHKSVHTRFPPEPNGYLHIGHAKSICLNFGLAKEYQGLCNLRFDDTNPVKEDVEYVDSIKADVEWLGFKWEGEPRYASDYFDALYGYAAELIKKGLAYVDELSPDEMREYRGTLTEPGKNSPYRDRTIEENLALFEKMKNGEFAEGKASLRAKIDMASPFMVMRDPVIYRIKFASHHQTGDKWCIYPMYDFTHCISDAIERITHSICTLEFQDNRRLYDWVLENISIERPLPHQYEFSRLNLEGTLTSKRKLLKLVNDEIVDGWNDPRMPTISGLRRRGYTPASLREFCRRIGVTKQDNVVEYSALEACIREDLNENAPRAMAVIDPVRVVIENFESEAVLTAPNHPNRPELGERQLPFTKELYIDRADFREEANKQYKRLVLGKEVRLRNAYVIKAERVEKDANGEITTIFCTYDPETLGKNPADGRKVKGVIHWVSAVNNHPAEFRLYDRLFTVPNPGAEDDIESVLNPNSLVIKQGFVEQSLANAEAEKGYQFEREGYFCADSKDSRPEHLVFNLTVSLKEGF.

The 'HIGH' region motif lies at 42–52 (PEPNGYLHIGH). ATP-binding positions include 43 to 45 (EPN) and 49 to 55 (HIGHAKS). Residues aspartate 75 and tyrosine 220 each coordinate L-glutamine. ATP contacts are provided by residues threonine 239 and 270–271 (RL). The 'KMSKS' region motif lies at 277 to 281 (LTSKR).

Belongs to the class-I aminoacyl-tRNA synthetase family. As to quaternary structure, monomer.

Its subcellular location is the cytoplasm. The catalysed reaction is tRNA(Gln) + L-glutamine + ATP = L-glutaminyl-tRNA(Gln) + AMP + diphosphate. The chain is Glutamine--tRNA ligase from Haemophilus influenzae (strain 86-028NP).